Reading from the N-terminus, the 366-residue chain is MNKVILYCRPGFEKECAAEITDKAARYNVYGFVRVKDNSGYVVFECYQHEDADRLIKELPFQELVFARQMMVCGELLRDLPPEDRITPIVGMLTGVLERAGELRVEVPDTNESKELMKFCRKFTVPLRAALRENRILLAQEKASRPVIHVLFIAPGCCYVGYSYSNNNSPFYMGIPRLKFPADAPSRSTLKLEEAFHVFVPADEWDERLGSGMFAVDLGACPGGWTYQLVKRSMMVHAVDNGMMAPSLMDTGQVIHHQADGFRFEPPRNNIYWLVCDMVEKPAKVTNRMADWLVNGWCREVIFNLKLPMKKRYEEVTQNLALLAQRLEENGINFEIHAKHLYHDREEITVHARRIWGAIPGRRDER.

Residues S188, 221 to 224 (CPGG), D240, D260, and D277 each bind S-adenosyl-L-methionine. The Proton acceptor role is filled by K306.

This sequence belongs to the class I-like SAM-binding methyltransferase superfamily. RNA methyltransferase RlmE family. RlmM subfamily. As to quaternary structure, monomer.

The protein localises to the cytoplasm. The catalysed reaction is cytidine(2498) in 23S rRNA + S-adenosyl-L-methionine = 2'-O-methylcytidine(2498) in 23S rRNA + S-adenosyl-L-homocysteine + H(+). Catalyzes the 2'-O-methylation at nucleotide C2498 in 23S rRNA. The chain is Ribosomal RNA large subunit methyltransferase M from Dickeya chrysanthemi (strain Ech1591) (Dickeya zeae (strain Ech1591)).